The primary structure comprises 116 residues: uncharacterized protein (116 aa).

2 consecutive transmembrane segments (helical) span residues 40-60 and 72-92; these read AIVKVDFFSFDGAGFCIIGIL and FLGSICRSIFSIVAQMQVVPI.

It localises to the membrane. This is an uncharacterized protein from Saccharomyces cerevisiae (strain ATCC 204508 / S288c) (Baker's yeast).